A 285-amino-acid polypeptide reads, in one-letter code: Biotin synthase (285 aa).

The Radical SAM core domain occupies 2–223 (STRKQIFLCA…RRAHTLLGED (222 aa)). 3 residues coordinate [4Fe-4S] cluster: cysteine 20, cysteine 24, and cysteine 27. [2Fe-2S] cluster contacts are provided by cysteine 64, cysteine 99, and cysteine 157.

Belongs to the radical SAM superfamily. Biotin synthase family. Homodimer. It depends on [4Fe-4S] cluster as a cofactor. The cofactor is [2Fe-2S] cluster.

It carries out the reaction (4R,5S)-dethiobiotin + (sulfur carrier)-SH + 2 reduced [2Fe-2S]-[ferredoxin] + 2 S-adenosyl-L-methionine = (sulfur carrier)-H + biotin + 2 5'-deoxyadenosine + 2 L-methionine + 2 oxidized [2Fe-2S]-[ferredoxin]. The protein operates within cofactor biosynthesis; biotin biosynthesis; biotin from 7,8-diaminononanoate: step 2/2. Catalyzes the conversion of dethiobiotin (DTB) to biotin by the insertion of a sulfur atom into dethiobiotin via a radical-based mechanism. This Sulfurovum sp. (strain NBC37-1) protein is Biotin synthase.